A 166-amino-acid chain; its full sequence is Lipoprotein signal peptidase (166 aa).

A run of 4 helical transmembrane segments spans residues 10–30 (GGALAPWLGISLIVILFDQLT), 46–66 (LTPFFNLTLIYNRGAAFGFLA), 71–91 (WQRWAFTALGIGATLVICYLL), and 100–120 (FSLSLALILGGALGNVIDRLI). Active-site residues include Asp126 and Asp144. Residues 135–155 (WHWPAFNLADSAITVGAVLLI) traverse the membrane as a helical segment.

This sequence belongs to the peptidase A8 family.

It localises to the cell inner membrane. It carries out the reaction Release of signal peptides from bacterial membrane prolipoproteins. Hydrolyzes -Xaa-Yaa-Zaa-|-(S,diacylglyceryl)Cys-, in which Xaa is hydrophobic (preferably Leu), and Yaa (Ala or Ser) and Zaa (Gly or Ala) have small, neutral side chains.. It participates in protein modification; lipoprotein biosynthesis (signal peptide cleavage). Functionally, this protein specifically catalyzes the removal of signal peptides from prolipoproteins. This Burkholderia thailandensis (strain ATCC 700388 / DSM 13276 / CCUG 48851 / CIP 106301 / E264) protein is Lipoprotein signal peptidase.